The chain runs to 487 residues: Protein DETOXIFICATION 11 (487 aa).

Transmembrane regions (helical) follow at residues 35-55, 73-93, 122-142, 151-171, 184-204, 211-231, 264-284, 293-313, 330-350, 377-397, 412-432, and 435-455; these read LICF…LQII, FAIS…SCAL, LVCL…VILG, AGRF…LQPL, LLIT…LLVY, IGGA…LGSF, AAML…SGLL, VLSV…AIAA, AAHI…LMVG, MAPL…LSGV, FGAF…WVHL, and VGLW…LALV.

The protein belongs to the multi antimicrobial extrusion (MATE) (TC 2.A.66.1) family.

The protein resides in the membrane. This Arabidopsis thaliana (Mouse-ear cress) protein is Protein DETOXIFICATION 11.